The following is a 146-amino-acid chain: Large-conductance mechanosensitive channel (146 aa).

3 consecutive transmembrane segments (helical) span residues 17 to 37, 40 to 60, and 89 to 109; these read IDLA…DSLV, IIMP…QKFV, and LTIL…VKLI.

It belongs to the MscL family. As to quaternary structure, homopentamer.

It is found in the cell inner membrane. Functionally, channel that opens in response to stretch forces in the membrane lipid bilayer. May participate in the regulation of osmotic pressure changes within the cell. The sequence is that of Large-conductance mechanosensitive channel from Acinetobacter baylyi (strain ATCC 33305 / BD413 / ADP1).